Reading from the N-terminus, the 388-residue chain is Regulator of G-protein signaling 20 (388 aa).

The segment at 138–199 (PGRPSGGRPL…TPGAAPGQPG (62 aa)) is disordered. A compositionally biased stretch (low complexity) spans 185 to 197 (PAAQDTPGAAPGQ). One can recognise an RGS domain in the interval 262-378 (SFDKLMVTPA…MNSAVYKDLL (117 aa)).

As to quaternary structure, forms a complex with G(alpha)z/i2 subunits and mu-opioid receptors; the formation of this complex results in mu-opioid receptor desensitization. Interacts with OPRM1. Post-translationally, fatty acylated. Heavily palmitoylated in the cysteine string motif. N- and O-glycosylated in synapsomal membranes. In terms of processing, serine phosphorylated in synapsomal membranes. Post-translationally, sumoylated with SUMO1 and SUMO2 in synaptosomes. The sumoylated forms act as a scaffold for sequestering mu-opioid receptor-activated G(alpha) subunits. Isoform 5 is expressed in brain at high levels in the caudate nucleus and temporal lobe.

It localises to the membrane. The protein resides in the nucleus. It is found in the cytoplasm. Its function is as follows. Inhibits signal transduction by increasing the GTPase activity of G protein alpha subunits thereby driving them into their inactive GDP-bound form. Binds selectively to G(z)-alpha and G(alpha)-i2 subunits, accelerates their GTPase activity and regulates their signaling activities. The G(z)-alpha activity is inhibited by the phosphorylation and palmitoylation of the G-protein. Negatively regulates mu-opioid receptor-mediated activation of the G-proteins. The chain is Regulator of G-protein signaling 20 (RGS20) from Homo sapiens (Human).